Reading from the N-terminus, the 329-residue chain is Putative 1-aminocyclopropane-1-carboxylate deaminase (329 aa).

An N6-(pyridoxal phosphate)lysine modification is found at K54.

Belongs to the ACC deaminase/D-cysteine desulfhydrase family. Requires pyridoxal 5'-phosphate as cofactor.

The catalysed reaction is 1-aminocyclopropane-1-carboxylate + H2O = 2-oxobutanoate + NH4(+). The polypeptide is Putative 1-aminocyclopropane-1-carboxylate deaminase (Pyrococcus furiosus (strain ATCC 43587 / DSM 3638 / JCM 8422 / Vc1)).